The primary structure comprises 349 residues: MIENRKEEHIKIAENENVVSEHNFWDDIRIVHRAIPEVDFNDIDTGVKFLGKQFNYPILISSMTGGTETAKIINKNLAMTAEHFKIGMGVGSMRVAVKNKNTADTFSVINDYKIPAKFANIGAPQLVRQDSDSLSDNDIEYIYNLINADFLIVHFNFLQEMVQPEGDRNSKGVIKRLKDIAGSYNVIAKETGSGFSKEDALSLLDAGVKAIDVGGLGGTSFAAIEYYRAQKANDEIKMHTGKAFWNWGIPSPASIKYCSLGEPVIGSGGLRNGLDLAKAIMFGATLGGFARELLKDANTSFDDVKRQMEMIINDLKITMMLTSSRNIDELKHARYITLEPLRSWLEVYK.

Residue 5-6 (RK) coordinates substrate. Residues S61, 62–64 (SMT), S92, and N120 each bind FMN. 92 to 94 (SMR) provides a ligand contact to substrate. Q159 lines the substrate pocket. E160 contacts Mg(2+). FMN is bound by residues K189, T219, 269-271 (GLR), and 290-291 (AR).

Belongs to the IPP isomerase type 2 family. In terms of assembly, homooctamer. Dimer of tetramers. The cofactor is FMN. It depends on NADPH as a cofactor. Requires Mg(2+) as cofactor.

The protein resides in the cytoplasm. The catalysed reaction is isopentenyl diphosphate = dimethylallyl diphosphate. Functionally, involved in the biosynthesis of isoprenoids. Catalyzes the 1,3-allylic rearrangement of the homoallylic substrate isopentenyl (IPP) to its allylic isomer, dimethylallyl diphosphate (DMAPP). This is Isopentenyl-diphosphate delta-isomerase from Picrophilus torridus (strain ATCC 700027 / DSM 9790 / JCM 10055 / NBRC 100828 / KAW 2/3).